Reading from the N-terminus, the 55-residue chain is Large ribosomal subunit protein bL33 (55 aa).

It belongs to the bacterial ribosomal protein bL33 family.

This is Large ribosomal subunit protein bL33 from Paenarthrobacter aurescens (strain TC1).